The primary structure comprises 124 residues: Small ribosomal subunit protein uS12 (124 aa).

A disordered region spans residues 1-28 (MPTIQQLIRTERQSSKAKTKSPALKSCP). D89 bears the 3-methylthioaspartic acid mark. The interval 104–124 (TAGVKDRRQSRSKYGAKTPKE) is disordered.

This sequence belongs to the universal ribosomal protein uS12 family. As to quaternary structure, part of the 30S ribosomal subunit. Contacts proteins S8 and S17. May interact with IF1 in the 30S initiation complex.

Its function is as follows. With S4 and S5 plays an important role in translational accuracy. In terms of biological role, interacts with and stabilizes bases of the 16S rRNA that are involved in tRNA selection in the A site and with the mRNA backbone. Located at the interface of the 30S and 50S subunits, it traverses the body of the 30S subunit contacting proteins on the other side and probably holding the rRNA structure together. The combined cluster of proteins S8, S12 and S17 appears to hold together the shoulder and platform of the 30S subunit. This chain is Small ribosomal subunit protein uS12, found in Synechococcus sp. (strain WH7803).